We begin with the raw amino-acid sequence, 771 residues long: Probable exo-1,4-beta-xylosidase bxlB (771 aa).

The N-terminal stretch at 1-25 (MVGLTPQHYGNAIALMTYLASTALA) is a signal peptide. A glycan (N-linked (GlcNAc...) asparagine) is linked at asparagine 67. Residue aspartate 293 is part of the active site. 5 N-linked (GlcNAc...) asparagine glycosylation sites follow: asparagine 305, asparagine 345, asparagine 423, asparagine 462, and asparagine 463.

It belongs to the glycosyl hydrolase 3 family.

The protein localises to the secreted. It catalyses the reaction Hydrolysis of (1-&gt;4)-beta-D-xylans, to remove successive D-xylose residues from the non-reducing termini.. It participates in glycan degradation; xylan degradation. Its function is as follows. Xylan 1,4-beta-xylosidase involved in the hydrolysis of xylan, a major structural heterogeneous polysaccharide found in plant biomass representing the second most abundant polysaccharide in the biosphere, after cellulose. The protein is Probable exo-1,4-beta-xylosidase bxlB (bxlB) of Aspergillus clavatus (strain ATCC 1007 / CBS 513.65 / DSM 816 / NCTC 3887 / NRRL 1 / QM 1276 / 107).